Reading from the N-terminus, the 164-residue chain is 2-C-methyl-D-erythritol 2,4-cyclodiphosphate synthase (164 aa).

Residues Asp9 and His11 each contribute to the a divalent metal cation site. 4-CDP-2-C-methyl-D-erythritol 2-phosphate-binding positions include 9 to 11 (DAH) and 36 to 37 (HS). An a divalent metal cation-binding site is contributed by His44. Residues 58-60 (DLG), 63-67 (FPDSD), 134-137 (TTTE), Phe141, and Arg144 each bind 4-CDP-2-C-methyl-D-erythritol 2-phosphate.

It belongs to the IspF family. As to quaternary structure, homotrimer. The cofactor is a divalent metal cation.

The catalysed reaction is 4-CDP-2-C-methyl-D-erythritol 2-phosphate = 2-C-methyl-D-erythritol 2,4-cyclic diphosphate + CMP. The protein operates within isoprenoid biosynthesis; isopentenyl diphosphate biosynthesis via DXP pathway; isopentenyl diphosphate from 1-deoxy-D-xylulose 5-phosphate: step 4/6. Functionally, involved in the biosynthesis of isopentenyl diphosphate (IPP) and dimethylallyl diphosphate (DMAPP), two major building blocks of isoprenoid compounds. Catalyzes the conversion of 4-diphosphocytidyl-2-C-methyl-D-erythritol 2-phosphate (CDP-ME2P) to 2-C-methyl-D-erythritol 2,4-cyclodiphosphate (ME-CPP) with a corresponding release of cytidine 5-monophosphate (CMP). The chain is 2-C-methyl-D-erythritol 2,4-cyclodiphosphate synthase from Alkalilimnicola ehrlichii (strain ATCC BAA-1101 / DSM 17681 / MLHE-1).